Consider the following 141-residue polypeptide: Large ribosomal subunit protein uL16 (141 aa).

It belongs to the universal ribosomal protein uL16 family. Part of the 50S ribosomal subunit.

Binds 23S rRNA and is also seen to make contacts with the A and possibly P site tRNAs. The chain is Large ribosomal subunit protein uL16 from Petrotoga mobilis (strain DSM 10674 / SJ95).